Here is a 477-residue protein sequence, read N- to C-terminus: Putative 4-(hydroxymethyl)benzenesulfonate dehydrogenase TsaD2 (477 aa).

Residues 154 to 155, 178 to 181, and 230 to 231 each bind NAD(+); these read WN, KAAE, and GS. Catalysis depends on Glu252, which acts as the Proton acceptor. Residue Leu253 coordinates NAD(+). The active-site Nucleophile is Cys286. Glu381 contacts NAD(+).

Belongs to the aldehyde dehydrogenase family. Homodimer.

The enzyme catalyses 4-(hydroxymethyl)benzenesulfonate + NAD(+) = 4-formylbenzenesulfonate + NADH + H(+). In terms of biological role, involved in the toluene-4-sulfonate degradation pathway. Does not discriminate between the sulfonate and the carboxyl substituents and can also be involved in the p-toluenecarboxylate degradation pathway. This chain is Putative 4-(hydroxymethyl)benzenesulfonate dehydrogenase TsaD2 (tsaD2), found in Comamonas testosteroni (Pseudomonas testosteroni).